Reading from the N-terminus, the 345-residue chain is Thylakoid lumenal 29 kDa protein, chloroplastic (345 aa).

This sequence belongs to the peroxidase family.

Its subcellular location is the plastid. The protein resides in the chloroplast thylakoid lumen. This Solanum lycopersicum (Tomato) protein is Thylakoid lumenal 29 kDa protein, chloroplastic (CLEB3J9).